Here is a 541-residue protein sequence, read N- to C-terminus: Serine/threonine-protein kinase akt-1 (541 aa).

A PH domain is found at 15-118 (DVVIEGWLHK…WIHAIESISK (104 aa)). Positions 193–450 (FDFLKVLGKG…ALEICRADFF (258 aa)) constitute a Protein kinase domain. ATP is bound by residues 199-207 (LGKGTFGKV) and K222. The active-site Proton acceptor is D316. At T350 the chain carries Phosphothreonine. In terms of domain architecture, AGC-kinase C-terminal spans 451–528 (RTVDWEATYR…HNVMGSINRI (78 aa)). The residue at position 517 (S517) is a Phosphoserine.

Belongs to the protein kinase superfamily. AGC Ser/Thr protein kinase family. RAC subfamily. As to quaternary structure, interacts with pdk-1, sgk-1, akt-2 and daf-16. Part of a complex containing sgk-1, akt-1 and akt-2. Interacts with cmd-1 in the presence of Ca(2+). Interacts with let-92 phosphatase regulatory subunit pptr-1. Mg(2+) serves as cofactor. Expressed in neurons, muscle cells of the pharynx, rectal gland cells, vulva and spermatheca.

It carries out the reaction L-seryl-[protein] + ATP = O-phospho-L-seryl-[protein] + ADP + H(+). The enzyme catalyses L-threonyl-[protein] + ATP = O-phospho-L-threonyl-[protein] + ADP + H(+). With respect to regulation, phosphorylated and activated by pdk-1. In terms of biological role, acts downstream of PI3 kinase age-1 and kinase pdk-1 in the daf-2/insulin receptor-like transduction pathway. Phosphorylates Forkhead-related daf-16 and the longevity-promoting skn-1 transcription factors, which inhibits their entry into the nucleus and antagonizes their functions. Plays a role in maintaining the gonadal basement membrane through it's role in inhibiting daf-16 activity. Has an essential role in regulating developmental arrest at the dauer stage. Plays a role in immune function and pathogen resistance. Regulates salt chemotaxis learning. Downstream of age-1 and together with akt-2 and sgk-1, promotes cell survival during embryonic development. This is Serine/threonine-protein kinase akt-1 from Caenorhabditis elegans.